The following is a 396-amino-acid chain: Na(+)/H(+) antiporter NhaA 1 (396 aa).

11 helical membrane passes run L18–L38, L60–V80, I95–G115, G126–G146, L155–F175, A178–L198, T201–L221, V262–I282, I295–V315, G333–L353, and A362–L382.

It belongs to the NhaA Na(+)/H(+) (TC 2.A.33) antiporter family.

The protein localises to the cell inner membrane. The enzyme catalyses Na(+)(in) + 2 H(+)(out) = Na(+)(out) + 2 H(+)(in). Functionally, na(+)/H(+) antiporter that extrudes sodium in exchange for external protons. In Syntrophotalea carbinolica (strain DSM 2380 / NBRC 103641 / GraBd1) (Pelobacter carbinolicus), this protein is Na(+)/H(+) antiporter NhaA 1.